The following is a 468-amino-acid chain: Zinc transporter SLC39A7 (468 aa).

Residues 10 to 30 (WVAVGLLTWAALGLLVAGHEG) traverse the membrane as a helical segment. 2 stretches are compositionally biased toward basic and acidic residues: residues 36-56 (RDVEEDFHGHSHGHSHEDFHH) and 64-100 (HTHESIWHGHAHSHDHGHSREDVHHGHSHGHSHDSLH). Positions 36–116 (RDVEEDFHGH…SHGASREAGA (81 aa)) are disordered. His64 carries the post-translational modification Pros-methylhistidine. Transmembrane regions (helical) follow at residues 132 to 152 (ALGATVLISAAPFFVLFLIPV), 163 to 183 (LQILLSFASGGLLGDAFLHLI), and 208 to 228 (GPILSVGLWVLSGIVAFLVVE). A compositionally biased stretch (basic residues) spans 237–248 (GHGHAHAHGHGH). The tract at residues 237–313 (GHGHAHAHGH…NPEEEKTGSD (77 aa)) is disordered. A compositionally biased stretch (basic and acidic residues) spans 249–312 (SHGDSHAHGH…QNPEEEKTGS (64 aa)). A run of 3 helical transmembrane segments spans residues 385 to 405 (LTAIGALAGTACALLTEGGAV), 409 to 429 (VAGGAGPGWVLPFTAGGFIYV), and 447 to 467 (SLLEVLGLLGGVAMMVLIAHL).

The protein belongs to the ZIP transporter (TC 2.A.5) family. KE4/Catsup subfamily. In terms of assembly, homodimer. Rapidly phosphorylated by CK2 following Zn(2+) treatment. This phosphorylation is required for efficient cytosolic Zn(2+) release.

It is found in the endoplasmic reticulum membrane. Its subcellular location is the golgi apparatus. It localises to the cis-Golgi network membrane. The catalysed reaction is Zn(2+)(in) = Zn(2+)(out). Functionally, transports Zn(2+) from the endoplasmic reticulum (ER)/Golgi apparatus to the cytosol, playing an essential role in the regulation of cytosolic zinc levels. Acts as a gatekeeper of zinc release from intracellular stores, requiring post-translational activation by phosphorylation on residues, resulting in activation of multiple downstream pathways leading to cell growth and proliferation. Has an essential role in B cell development and is required for proper B cell receptor signaling. Plays an important role in maintaining intestinal epithelial homeostasis and skin dermis development by regulating ER function. Controls cell signaling pathways involved in glucose metabolism in skeletal muscle. Has a protective role against ER stress in different biological contexts. Mediates Zn(2+)-induced ferroptosis. The protein is Zinc transporter SLC39A7 of Rattus norvegicus (Rat).